Consider the following 413-residue polypeptide: Gamma-glutamyl phosphate reductase (413 aa).

Belongs to the gamma-glutamyl phosphate reductase family.

The protein resides in the cytoplasm. It catalyses the reaction L-glutamate 5-semialdehyde + phosphate + NADP(+) = L-glutamyl 5-phosphate + NADPH + H(+). The protein operates within amino-acid biosynthesis; L-proline biosynthesis; L-glutamate 5-semialdehyde from L-glutamate: step 2/2. Catalyzes the NADPH-dependent reduction of L-glutamate 5-phosphate into L-glutamate 5-semialdehyde and phosphate. The product spontaneously undergoes cyclization to form 1-pyrroline-5-carboxylate. In Anoxybacillus flavithermus (strain DSM 21510 / WK1), this protein is Gamma-glutamyl phosphate reductase.